The sequence spans 104 residues: Gastrin (104 aa).

Residues 1 to 21 (MQRLCAHALILVLALAAFCEA) form the signal peptide. Positions 22 to 58 (SWKPHSQLQDAPVAPGANKGQEPLRMDRLGPASHPRR) are excised as a propeptide. Residues 26–70 (HSQLQDAPVAPGANKGQEPLRMDRLGPASHPRRQLGLQDPPHMVA) are disordered. Tyr-87 is modified (sulfotyrosine). Phe-92 is modified (phenylalanine amide). A Phosphoserine modification is found at Ser-96. Positions 96 to 104 (SAEEGDQHP) are excised as a propeptide.

It belongs to the gastrin/cholecystokinin family. Post-translationally, sulfation enhances proteolytic processing, and blocks peptide degradation. Levels of sulfation differ between proteolytically-cleaved gastrins and between tissues.

It localises to the secreted. Its function is as follows. Gastrin stimulates the stomach mucosa to produce and secrete hydrochloric acid and the pancreas to secrete its digestive enzymes. It also stimulates smooth muscle contraction and increases blood circulation and water secretion in the stomach and intestine. In Ovis aries (Sheep), this protein is Gastrin (GAST).